The chain runs to 314 residues: Methionyl-tRNA formyltransferase (314 aa).

Residue 112 to 115 (SLLP) coordinates (6S)-5,6,7,8-tetrahydrofolate.

Belongs to the Fmt family.

It carries out the reaction L-methionyl-tRNA(fMet) + (6R)-10-formyltetrahydrofolate = N-formyl-L-methionyl-tRNA(fMet) + (6S)-5,6,7,8-tetrahydrofolate + H(+). Its function is as follows. Attaches a formyl group to the free amino group of methionyl-tRNA(fMet). The formyl group appears to play a dual role in the initiator identity of N-formylmethionyl-tRNA by promoting its recognition by IF2 and preventing the misappropriation of this tRNA by the elongation apparatus. In Aeromonas hydrophila subsp. hydrophila (strain ATCC 7966 / DSM 30187 / BCRC 13018 / CCUG 14551 / JCM 1027 / KCTC 2358 / NCIMB 9240 / NCTC 8049), this protein is Methionyl-tRNA formyltransferase.